A 208-amino-acid chain; its full sequence is FMN-dependent NADH:quinone oxidoreductase 1 (208 aa).

FMN contacts are provided by residues Ser-10, Ser-15 to Ser-17, and Met-97 to Phe-100.

It belongs to the azoreductase type 1 family. As to quaternary structure, homodimer. It depends on FMN as a cofactor.

The enzyme catalyses 2 a quinone + NADH + H(+) = 2 a 1,4-benzosemiquinone + NAD(+). It catalyses the reaction N,N-dimethyl-1,4-phenylenediamine + anthranilate + 2 NAD(+) = 2-(4-dimethylaminophenyl)diazenylbenzoate + 2 NADH + 2 H(+). Functionally, quinone reductase that provides resistance to thiol-specific stress caused by electrophilic quinones. Its function is as follows. Also exhibits azoreductase activity. Catalyzes the reductive cleavage of the azo bond in aromatic azo compounds to the corresponding amines. The sequence is that of FMN-dependent NADH:quinone oxidoreductase 1 from Bradyrhizobium diazoefficiens (strain JCM 10833 / BCRC 13528 / IAM 13628 / NBRC 14792 / USDA 110).